Reading from the N-terminus, the 226-residue chain is MLTWLSRTNYDFPPLDKALQEPNGLLAAGGDLDPRRLIAAYRHGCFPWYQDGQPILWWSPDPRTVLLPEELHVSRSLAKCLRQQRFEVTFNRDFRAVIQACAAPRDYADGTWITTPMQLAYQELHLRGVAHSVEVWQAGQLVGGLYGLAMGRLFFGESMFSRADNASKVGFVTLVRHLRDAGFVLIDCQMPTRHLHSLGARAISREAFADYLQRYRDESPSGTLDF.

The protein belongs to the L/F-transferase family.

It is found in the cytoplasm. It carries out the reaction N-terminal L-lysyl-[protein] + L-leucyl-tRNA(Leu) = N-terminal L-leucyl-L-lysyl-[protein] + tRNA(Leu) + H(+). The enzyme catalyses N-terminal L-arginyl-[protein] + L-leucyl-tRNA(Leu) = N-terminal L-leucyl-L-arginyl-[protein] + tRNA(Leu) + H(+). The catalysed reaction is L-phenylalanyl-tRNA(Phe) + an N-terminal L-alpha-aminoacyl-[protein] = an N-terminal L-phenylalanyl-L-alpha-aminoacyl-[protein] + tRNA(Phe). Functions in the N-end rule pathway of protein degradation where it conjugates Leu, Phe and, less efficiently, Met from aminoacyl-tRNAs to the N-termini of proteins containing an N-terminal arginine or lysine. This Pseudomonas paraeruginosa (strain DSM 24068 / PA7) (Pseudomonas aeruginosa (strain PA7)) protein is Leucyl/phenylalanyl-tRNA--protein transferase.